We begin with the raw amino-acid sequence, 505 residues long: RNA-splicing ligase RtcB homolog (505 aa).

Mn(2+)-binding residues include D119, C122, H227, and H259. Position 226–230 (226–230 (NHYAE)) interacts with GMP. S300 bears the Phosphoserine mark. Residue H353 participates in Mn(2+) binding. Residues 353–354 (HN), 402–405 (GGTM), S409, and 428–431 (HGAG) contribute to the GMP site. H428 (GMP-histidine intermediate) is an active-site residue. K496 is covalently cross-linked (Glycyl lysine isopeptide (Lys-Gly) (interchain with G-Cter in SUMO2)). K504 lines the GMP pocket.

This sequence belongs to the RtcB family. In terms of assembly, catalytic component of the tRNA-splicing ligase complex. It depends on Mn(2+) as a cofactor.

The protein localises to the nucleus. It is found in the cytoplasm. It carries out the reaction a 3'-end 3'-phospho-ribonucleotide-RNA + a 5'-end dephospho-ribonucleoside-RNA + GTP = a ribonucleotidyl-ribonucleotide-RNA + GMP + diphosphate. It catalyses the reaction a 3'-end 2',3'-cyclophospho-ribonucleotide-RNA + a 5'-end dephospho-ribonucleoside-RNA + GTP + H2O = a ribonucleotidyl-ribonucleotide-RNA + GMP + diphosphate + H(+). Catalytic subunit of the tRNA-splicing ligase complex that acts by directly joining spliced tRNA halves to mature-sized tRNAs by incorporating the precursor-derived splice junction phosphate into the mature tRNA as a canonical 3',5'-phosphodiester. May act as an RNA ligase with broad substrate specificity, and may function toward other RNAs. This chain is RNA-splicing ligase RtcB homolog, found in Sus scrofa (Pig).